We begin with the raw amino-acid sequence, 904 residues long: Disks large homolog 1 (904 aa).

Positions 4 to 64 constitute an L27 domain; the sequence is RKQDTQRALH…FYEVTLLDNP (61 aa). Thr115 is subject to Phosphothreonine. 3 positions are modified to phosphoserine: Ser122, Ser138, and Ser158. Positions 162–212 are interaction with SH3 domains; sequence PTEAVLPSPPTVPVIPVLPVPAENTVILPTIPQANPPPVLVNTDSLETPTY. PDZ domains are found at residues 224-310, 319-405, and 466-546; these read EITL…VKRR, EIKL…VAKP, and KVVL…AQYR. Residues 224-546 are required for interaction with MARCHF2; the sequence is EITLERGNSG…QAVTIVAQYR (323 aa). Ser232 carries the post-translational modification Phosphoserine. Phosphotyrosine is present on Tyr399. Ser568, Ser573, Ser575, Ser579, Ser598, Ser619, Ser676, Ser684, Ser687, Gln709, and Ser834 each carry phosphoserine. The SH3 domain occupies 581–651; sequence KRSLYVRALF…PSKRRVEKKE (71 aa). A disordered region spans residues 662–693; the sequence is SKTRDKGEIPDDMGSKGLKHVTSNASDSESSY. Residues 682–693 show a composition bias toward polar residues; it reads VTSNASDSESSY. One can recognise a Guanylate kinase-like domain in the interval 714 to 889; it reads TRPVIILGPM…IYNQVKQIIE (176 aa).

Belongs to the MAGUK family. Homotetramer. Interacts (via guanylate kinase-like domain) with DLGAP1, DLGAP2, DLGAP3, DLGAP4 and MAP1A. Interacts (via guanylate kinase-like domain) with KIF13B. May interact with HTR2A. Interacts (via PDZ domains) with GRIA1. Interacts (via PDZ domains) with GRIN2A. Interacts (via PDZ domains) with KCND2 and KCND3. Interacts (via PDZ domains) with KCNA1, KCNA2, KCNA3 and KCNA4. Interacts (via PDZ domains) with ADGRA3. Interacts with KCNF1. Interacts with CAMK2. Interacts with cytoskeleton-associated protein EPB41. Interacts with cytoskeleton-associated protein EZR. Found in a complex with KCNA5 and CAV3. Found in a complex with APC and CTNNB1. Interacts (via PDZ domains) with APC. Interacts with CDH1 through binding to PIK3R1. Forms multiprotein complexes with CASK, LIN7A, LIN7B, LIN7C, APBA1, and KCNJ12. Interacts with TOPK. Forms a tripartite complex composed of DLG1, MPP7 and LIN7 (LIN7A or LIN7C). May interact with TJAP1. Interacts with PTEN. Interacts with FRMPD4 (via C-terminus). Interacts with LRFN1, LRFN2 and LRFN4. Interacts with SFPQ. Interacts (via PDZ domains) with ADGRA2 (via PDZ-binding motif). Interacts with ADAM10; this interaction recruits ADAM10 to the cell membrane during long-term depression in hippocampal neurons. Interacts with DGKI (via PDZ-binding motif). Interacts (via PDZ domains) with MARCHF2 (via PDZ domain); the interaction leads to DLG1 ubiqtuitination and degradation. Interacts (via N-terminus) with MPP3; this interaction connects CADM1 with DLG1 and links CADM1 with the regulatory subunit of phosphoinositide-3-kinase (PI3K) by forming a multiprotein complex and participates in cell spreading. In terms of assembly, (Microbial infection) Interacts with HTLV-1 protein Tax. As to quaternary structure, (Microbial infection) Interacts (via PDZ domains 1 and 2) with influenza A virus protein NS1; the interaction results in the translocation of DLG1 from the cell membrane to perinuclear puncta. Acts as a scaffold protein to facilitate the interaction between LIN7C and influenza A virus protein NS1; the interaction facilitates translocation of LIN7C to cytoplasmic puncta. (Microbial infection) Interacts with human papillomavirus 18/HPV-18 protein E6. In terms of processing, phosphorylated by MAPK12. Phosphorylation of Ser-232 regulates association with GRIN2A. Post-translationally, ubiquitinated; by MARCHF2 which results in its degradation. Abundantly expressed in atrial myocardium (at protein level). Expressed in lung fibroblasts, cervical epithelial and B-cells (at protein level). Expressed in the brain (at protein level). Widely expressed, with isoforms displaying different expression profiles.

It is found in the cell membrane. The protein resides in the basolateral cell membrane. It localises to the endoplasmic reticulum membrane. Its subcellular location is the postsynaptic density. The protein localises to the synapse. It is found in the sarcolemma. The protein resides in the apical cell membrane. It localises to the cell junction. Its subcellular location is the cytoplasm. Essential multidomain scaffolding protein required for normal development. Recruits channels, receptors and signaling molecules to discrete plasma membrane domains in polarized cells. Promotes epithelial cell layer barrier function via maintaining cell-cell adhesion. May also play a role in adherens junction assembly, signal transduction, cell proliferation, synaptogenesis and lymphocyte activation. Regulates the excitability of cardiac myocytes by modulating the functional expression of Kv4 channels. Functional regulator of Kv1.5 channel. During long-term depression in hippocampal neurons, it recruits ADAM10 to the plasma membrane. This chain is Disks large homolog 1, found in Homo sapiens (Human).